Reading from the N-terminus, the 247-residue chain is 14-3-3 protein gamma (247 aa).

It belongs to the 14-3-3 family. As to quaternary structure, homodimer, and heterodimer with other family members.

The protein resides in the cytoplasm. In terms of biological role, adapter protein implicated in the regulation of a large spectrum of both general and specialized signaling pathways. Binds to a large number of partners, usually by recognition of a phosphoserine or phosphothreonine motif. Binding generally results in the modulation of the activity of the binding partner. This is 14-3-3 protein gamma (YWHAG) from Gallus gallus (Chicken).